The chain runs to 139 residues: FLYWCH family member 2 (139 aa).

2 disordered regions span residues Met1–Pro36 and Glu86–Pro139. Basic and acidic residues predominate over residues Pro98–Leu107. Residues Val120 to Val130 show a composition bias toward low complexity.

This is FLYWCH family member 2 (Flywch2) from Mus musculus (Mouse).